Reading from the N-terminus, the 763-residue chain is MLCESEARSTLADPVPMAYLSVDAQGSSEVSLDDITINSSAGTVEVCSMKPADDPKTERSQMNKTGLASSSRPASNVWTTQQDGEVKLRMDEEGMGSEAPKTVHEVFQEAVSKYGDYYALASKKNGQWVKLTYKMYYDKCWKAAKSFLKLVLERFHGVCILGFNSPEWFIADIGAIFAGGLAVGIYTTNSPEACHYVAENCSANILVVENHTQACRKSLEIEHKLPHMKAIIQYGEELKEKRPNQYSWREFLDLGEDIPDSQLREIIESQKPNQCCTLIYTSGTTGQPKGVMLSHDNLTWTSIAAGRSLMLLEATEKQELVVSYLPLSHVAAQMIDIWLPVTFGGQVFFAQPDALKGTLVDTLREVRPTAFLGVPRVWEKIEEKMKSVGAKSSTLRRKVASWAKGVGLQTNLKWMNGHSEVPMNFRLARQLVYKKVRKAIGLDRCTKCFTGAAPISRETLEFFLSLNIPVFELYGMSESSGPHTVSIPQAFRLTSCGKEMAGCRTLIHKPDADGIGEICFAGRHIFMGYLNMEEKTKEAIDKDGWLHSGDLGKCDKDGFIYITGRIKELIITAGGENVPPVPIEDAVKEACPIISNAMLVGDKAKFLAMLLTLKCIINTESGEPGDDLTAEAIEYCQKLGSKATKVSEIISSKDKAVYAAIQAAVSEVNKRAVSNAQKIQKWVVLEKDFSVGGGELGPTMKLKRPVVAQKYKDLIDEFYADANTPTTTEERTSAVMWGGRKLPLVHSIVSLGSLQQIQRVLQK.

Residues 47-78 (CSMKPADDPKTERSQMNKTGLASSSRPASNVW) are disordered. A compositionally biased stretch (basic and acidic residues) spans 51–61 (PADDPKTERSQ). Polar residues predominate over residues 62-78 (MNKTGLASSSRPASNVW). ATP-binding positions include 281-289 (TSGTTGQPK), 472-477 (ELYGMS), Asp-550, Arg-565, and Lys-678.

It belongs to the ATP-dependent AMP-binding enzyme family. Bubblegum subfamily.

The protein localises to the cytoplasm. It carries out the reaction a long-chain fatty acid + ATP + CoA = a long-chain fatty acyl-CoA + AMP + diphosphate. The enzyme catalyses (5Z,8Z,11Z,14Z)-eicosatetraenoate + ATP + CoA = (5Z,8Z,11Z,14Z)-eicosatetraenoyl-CoA + AMP + diphosphate. The catalysed reaction is hexadecanoate + ATP + CoA = hexadecanoyl-CoA + AMP + diphosphate. It catalyses the reaction (9Z)-octadecenoate + ATP + CoA = (9Z)-octadecenoyl-CoA + AMP + diphosphate. It carries out the reaction (9Z,12Z)-octadecadienoate + ATP + CoA = (9Z,12Z)-octadecadienoyl-CoA + AMP + diphosphate. The enzyme catalyses tetracosanoate + ATP + CoA = tetracosanoyl-CoA + AMP + diphosphate. Its function is as follows. Mediates activation of long-chain fatty acids for both synthesis of cellular lipids, and degradation via beta-oxidation. In terms of biological role, catalyzes the conversion of fatty acids such as long chain and very long-chain fatty acids to their active form acyl-CoAs for both synthesis of cellular lipids, and degradation via beta-oxidation. Can activate diverse saturated, monosaturated and polyunsaturated fatty acids. This is Long-chain-fatty-acid--CoA ligase ACSBG2 from Gallus gallus (Chicken).